Here is a 396-residue protein sequence, read N- to C-terminus: Gamma-D-glutamyl-L-diamino acid endopeptidase 1 (396 aa).

LysM domains lie at 1 to 45 (MDIL…RIQI) and 51 to 95 (TSYT…TIQV). The Peptidase M14 domain occupies 108 to 394 (QNYDYSMMMN…EALGIFLAGL (287 aa)). Zn(2+) is bound by residues histidine 162 and glutamate 165. Residue aspartate 255 coordinates substrate. Histidine 307 contacts Zn(2+). Tyrosine 347 (proton donor) is an active-site residue. Residue glutamate 366 is the Proton donor/acceptor of the active site.

It belongs to the peptidase M14 family. Zn(2+) is required as a cofactor.

The catalysed reaction is Hydrolysis of gamma-D-glutamyl bonds to the L-terminus (position 7) of meso-diaminopimelic acid (meso-A2pm) in 7-(L-Ala-gamma-D-Glu)-meso-A2pm and 7-(L-Ala-gamma-D-Glu)-7-(D-Ala)-meso-A2pm. It is required that the D-terminal amino and carboxy groups of meso-A2pm are unsubstituted.. Functionally, an endopeptidase which hydrolyzes the gamma-D-Glu-(L)meso-diaminopimelic acid bond of L-Ala-gamma-D-Glu-(L)meso-diaminopimelic acid and L-Ala-gamma-D-Glu-(L)meso-diaminopimelic acid(L)-D-Ala peptides. It is active on spore cortex peptidoglycan. The chain is Gamma-D-glutamyl-L-diamino acid endopeptidase 1 from Lysinibacillus sphaericus (Bacillus sphaericus).